A 297-amino-acid chain; its full sequence is Ribosomal protein L11 methyltransferase (297 aa).

S-adenosyl-L-methionine is bound by residues Thr152, Gly173, Asp195, and Asn234.

It belongs to the methyltransferase superfamily. PrmA family.

It localises to the cytoplasm. The catalysed reaction is L-lysyl-[protein] + 3 S-adenosyl-L-methionine = N(6),N(6),N(6)-trimethyl-L-lysyl-[protein] + 3 S-adenosyl-L-homocysteine + 3 H(+). Methylates ribosomal protein L11. This chain is Ribosomal protein L11 methyltransferase, found in Cupriavidus pinatubonensis (strain JMP 134 / LMG 1197) (Cupriavidus necator (strain JMP 134)).